A 157-amino-acid polypeptide reads, in one-letter code: Endoribonuclease YbeY (157 aa).

Residues histidine 114, histidine 118, and histidine 124 each contribute to the Zn(2+) site.

The protein belongs to the endoribonuclease YbeY family. Zn(2+) is required as a cofactor.

The protein localises to the cytoplasm. Its function is as follows. Single strand-specific metallo-endoribonuclease involved in late-stage 70S ribosome quality control and in maturation of the 3' terminus of the 16S rRNA. The protein is Endoribonuclease YbeY of Yersinia pseudotuberculosis serotype O:3 (strain YPIII).